Here is a 305-residue protein sequence, read N- to C-terminus: UDP-3-O-acyl-N-acetylglucosamine deacetylase (305 aa).

Positions 79, 238, and 242 each coordinate Zn(2+). Residue His265 is the Proton donor of the active site.

This sequence belongs to the LpxC family. Zn(2+) serves as cofactor.

The catalysed reaction is a UDP-3-O-[(3R)-3-hydroxyacyl]-N-acetyl-alpha-D-glucosamine + H2O = a UDP-3-O-[(3R)-3-hydroxyacyl]-alpha-D-glucosamine + acetate. Its pathway is glycolipid biosynthesis; lipid IV(A) biosynthesis; lipid IV(A) from (3R)-3-hydroxytetradecanoyl-[acyl-carrier-protein] and UDP-N-acetyl-alpha-D-glucosamine: step 2/6. In terms of biological role, catalyzes the hydrolysis of UDP-3-O-myristoyl-N-acetylglucosamine to form UDP-3-O-myristoylglucosamine and acetate, the committed step in lipid A biosynthesis. The sequence is that of UDP-3-O-acyl-N-acetylglucosamine deacetylase from Erwinia tasmaniensis (strain DSM 17950 / CFBP 7177 / CIP 109463 / NCPPB 4357 / Et1/99).